The chain runs to 142 residues: Two-component response regulator ARR22 (142 aa).

Residues 23-140 (NVLIVDDDPL…KIFPLISHLF (118 aa)) form the Response regulatory domain. Asp74 carries the 4-aspartylphosphate modification.

The protein belongs to the ARR family. Type-A subfamily. Post-translationally, two-component system major event consists of a His-to-Asp phosphorelay between a sensor histidine kinase (HK) and a response regulator (RR). In plants, the His-to-Asp phosphorelay involves an additional intermediate named Histidine-containing phosphotransfer protein (HPt). This multistep phosphorelay consists of a His-Asp-His-Asp sequential transfer of a phosphate group between first a His and an Asp of the HK protein, followed by the transfer to a conserved His of the HPt protein and finally the transfer to an Asp in the receiver domain of the RR protein.

The protein resides in the nucleus. Its function is as follows. Functions as a response regulator involved in His-to-Asp phosphorelay signal transduction system. Phosphorylation of the Asp residue in the receiver domain activates the ability of the protein to promote the transcription of target genes. Type-A response regulators seem to act as negative regulators of the cytokinin signaling. The chain is Two-component response regulator ARR22 (ARR22) from Arabidopsis thaliana (Mouse-ear cress).